The primary structure comprises 468 residues: Serine--tRNA ligase (468 aa).

Residue 272-274 participates in L-serine binding; it reads TAE. 303–305 contacts ATP; that stretch reads RAE. Residue Glu326 coordinates L-serine. ATP is bound at residue 390–393; that stretch reads EISS. Residue Ser426 coordinates L-serine.

This sequence belongs to the class-II aminoacyl-tRNA synthetase family. Type-1 seryl-tRNA synthetase subfamily. In terms of assembly, homodimer. The tRNA molecule binds across the dimer.

The protein resides in the cytoplasm. The catalysed reaction is tRNA(Ser) + L-serine + ATP = L-seryl-tRNA(Ser) + AMP + diphosphate + H(+). It catalyses the reaction tRNA(Sec) + L-serine + ATP = L-seryl-tRNA(Sec) + AMP + diphosphate + H(+). It participates in aminoacyl-tRNA biosynthesis; selenocysteinyl-tRNA(Sec) biosynthesis; L-seryl-tRNA(Sec) from L-serine and tRNA(Sec): step 1/1. Catalyzes the attachment of serine to tRNA(Ser). Is also able to aminoacylate tRNA(Sec) with serine, to form the misacylated tRNA L-seryl-tRNA(Sec), which will be further converted into selenocysteinyl-tRNA(Sec). The polypeptide is Serine--tRNA ligase (Xanthobacter autotrophicus (strain ATCC BAA-1158 / Py2)).